We begin with the raw amino-acid sequence, 386 residues long: Succinate--CoA ligase [ADP-forming] subunit beta (386 aa).

Residues 9–244 (KELLRSYGVP…ETEEDPREVE (236 aa)) form the ATP-grasp domain. ATP contacts are provided by residues K46, 53–55 (GRG), E99, C102, and E107. Positions 199 and 213 each coordinate Mg(2+). Substrate is bound by residues N264 and 321–323 (GIM).

The protein belongs to the succinate/malate CoA ligase beta subunit family. Heterotetramer of two alpha and two beta subunits. It depends on Mg(2+) as a cofactor.

The catalysed reaction is succinate + ATP + CoA = succinyl-CoA + ADP + phosphate. It catalyses the reaction GTP + succinate + CoA = succinyl-CoA + GDP + phosphate. The protein operates within carbohydrate metabolism; tricarboxylic acid cycle; succinate from succinyl-CoA (ligase route): step 1/1. Succinyl-CoA synthetase functions in the citric acid cycle (TCA), coupling the hydrolysis of succinyl-CoA to the synthesis of either ATP or GTP and thus represents the only step of substrate-level phosphorylation in the TCA. The beta subunit provides nucleotide specificity of the enzyme and binds the substrate succinate, while the binding sites for coenzyme A and phosphate are found in the alpha subunit. The sequence is that of Succinate--CoA ligase [ADP-forming] subunit beta from Exiguobacterium sibiricum (strain DSM 17290 / CCUG 55495 / CIP 109462 / JCM 13490 / 255-15).